The primary structure comprises 82 residues: Protein transport protein Sec61 subunit beta (82 aa).

At M1 the chain carries N-acetylmethionine. The tract at residues 1-34 (MVGSGAPQRGSAAATASMRRRKPTSGAGGGGASG) is disordered. Residues 1 to 55 (MVGSGAPQRGSAAATASMRRRKPTSGAGGGGASGGAAGSMLQFYTDDAPGLKISP) are Cytoplasmic-facing. A helical membrane pass occupies residues 56 to 76 (NVVLIMSIGFIAFVAVLHVMG).

The protein belongs to the SEC61-beta family. In terms of assembly, heterotrimeric complex composed of SEC61-alpha, SEC61-beta and SEC61-gamma.

The protein resides in the endoplasmic reticulum membrane. Its function is as follows. Necessary for protein translocation in the endoplasmic reticulum. The chain is Protein transport protein Sec61 subunit beta from Arabidopsis thaliana (Mouse-ear cress).